We begin with the raw amino-acid sequence, 431 residues long: Enolase (431 aa).

Glutamine 166 serves as a coordination point for (2R)-2-phosphoglycerate. Glutamate 208 (proton donor) is an active-site residue. Aspartate 245, glutamate 288, and aspartate 315 together coordinate Mg(2+). (2R)-2-phosphoglycerate contacts are provided by lysine 340, arginine 369, serine 370, and lysine 391. Lysine 340 acts as the Proton acceptor in catalysis.

It belongs to the enolase family. Requires Mg(2+) as cofactor.

The protein localises to the cytoplasm. Its subcellular location is the secreted. It is found in the cell surface. The catalysed reaction is (2R)-2-phosphoglycerate = phosphoenolpyruvate + H2O. The protein operates within carbohydrate degradation; glycolysis; pyruvate from D-glyceraldehyde 3-phosphate: step 4/5. Its function is as follows. Catalyzes the reversible conversion of 2-phosphoglycerate (2-PG) into phosphoenolpyruvate (PEP). It is essential for the degradation of carbohydrates via glycolysis. This is Enolase from Clostridium botulinum (strain ATCC 19397 / Type A).